The chain runs to 210 residues: MTSQRVRDRLVERLRECGIQDERVLSTIRIVPRHLFIDEALALRAYEDTALPIGHGQTISQPWIVARMTEAVMQVAPKKILEIGTGSGYQSAILASLGLEVYTIERIGKLLRQARKRFRQLGIKIRSKHDDGSTGWTEHAPYNAILVTAAAPTLIDTLIEQLAIGGRLVAPVGTASEQALVQLTRTIDGSITHEILEPVTFVSLLPGMLD.

S60 is a catalytic residue.

This sequence belongs to the methyltransferase superfamily. L-isoaspartyl/D-aspartyl protein methyltransferase family.

It is found in the cytoplasm. The enzyme catalyses [protein]-L-isoaspartate + S-adenosyl-L-methionine = [protein]-L-isoaspartate alpha-methyl ester + S-adenosyl-L-homocysteine. Functionally, catalyzes the methyl esterification of L-isoaspartyl residues in peptides and proteins that result from spontaneous decomposition of normal L-aspartyl and L-asparaginyl residues. It plays a role in the repair and/or degradation of damaged proteins. This Xylella fastidiosa (strain M12) protein is Protein-L-isoaspartate O-methyltransferase.